Reading from the N-terminus, the 279-residue chain is Urease accessory protein UreD (279 aa).

Belongs to the UreD family. In terms of assembly, ureD, UreF and UreG form a complex that acts as a GTP-hydrolysis-dependent molecular chaperone, activating the urease apoprotein by helping to assemble the nickel containing metallocenter of UreC. The UreE protein probably delivers the nickel.

Its subcellular location is the cytoplasm. Functionally, required for maturation of urease via the functional incorporation of the urease nickel metallocenter. In Nitrosospira multiformis (strain ATCC 25196 / NCIMB 11849 / C 71), this protein is Urease accessory protein UreD.